Here is a 277-residue protein sequence, read N- to C-terminus: Protein EURL homolog (277 aa).

Residues 173–201 (LGLWPGERPQNREQRDSRQRRHSGHSREE) are disordered. The stretch at 197–229 (HSREELMRKNVEELRQLNEQLLLQIQNVFEELS) forms a coiled coil.

This sequence belongs to the EURL family.

Functionally, plays a role in cortical progenitor cell proliferation and differentiation. May promote dendritic spine development of post-migratory cortical projection neurons by modulating the beta-catenin signaling pathway. The chain is Protein EURL homolog from Danio rerio (Zebrafish).